The following is a 326-amino-acid chain: Transcription factor WRKY45-1 (326 aa).

Disordered regions lie at residues 67 to 114 (GGEG…SVVV) and 252 to 288 (GVGS…FGPD). Residues 112-180 (VVVKNLDDGQ…YIGEHTCRDP (69 aa)) constitute a DNA-binding region (WRKY). Residues 273-283 (RGGGGGGGVAG) show a composition bias toward gly residues.

The protein belongs to the WRKY group III family. Expressed in aleurone cells.

The protein localises to the nucleus. Functionally, transcriptional activator involved in defense responses against pathogens. Acts as a positive regulator of defense responses against the rice blast fungus Magnaporthe oryzae. Acts through W-boxes, which are cis-elements that are enriched in the promoters of several defense-related genes. Plays an important role in the benzothiadiazole-induced disease resistance by mediating salicylic acid (SA) defense signaling pathway, independently of the disease resistance gene NPR1/NH1. Acts as a negative regulator of defense responses against the bacterial blight Xanthomonas oryzae pv oryzae (Xoo) and the bacterial streak Xanthomonas oryzae pv oryzicola (Xoc). Acts downstream of abscisic acid (ABA) signaling in response to the rice blast fungus. ABA is a negative regulator of defense responses that interacts antagonistically with salicylic acid (SA) signaling pathway. Acts as a negative regulator of ABA signaling that suppresses growth of seedlings. Does not seem to be involved in the regulation of salt stress response. Acts as a negative regulator of cold stress response. Acts as a negative regulator of drought stress response. The sequence is that of Transcription factor WRKY45-1 from Oryza sativa subsp. japonica (Rice).